Reading from the N-terminus, the 378-residue chain is Vacuolar membrane protein CAGL0J10076g (378 aa).

A disordered region spans residues 18 to 70 (RGLPRLVTTSTTPTPTTEPTTEPTTTKDETSQTSATDASTATTSTAATSTAAT). 2 stretches are compositionally biased toward low complexity: residues 25-41 (TTSTTPTPTTEPTTEPT) and 48-70 (SQTSATDASTATTSTAATSTAAT). Residues 118 to 138 (FIAVGSIAGAILMLIFLWWSI) form a helical membrane-spanning segment. The interval 299 to 368 (NDYDTPLIPD…ARDHRKTPSM (70 aa)) is disordered. Over residues 321 to 337 (RSHRKTPSNDKYHRRNR) the composition is skewed to basic residues. A compositionally biased stretch (low complexity) spans 343–356 (SPSRSPTRTPIRTR).

This sequence belongs to the PRM5 family.

The protein resides in the vacuole membrane. The polypeptide is Vacuolar membrane protein CAGL0J10076g (Candida glabrata (strain ATCC 2001 / BCRC 20586 / JCM 3761 / NBRC 0622 / NRRL Y-65 / CBS 138) (Yeast)).